Reading from the N-terminus, the 157-residue chain is 2-C-methyl-D-erythritol 2,4-cyclodiphosphate synthase (157 aa).

2 residues coordinate a divalent metal cation: Asp-8 and His-10. 4-CDP-2-C-methyl-D-erythritol 2-phosphate contacts are provided by residues 8 to 10 (DVH) and 34 to 35 (HS). His-42 contacts a divalent metal cation. 4-CDP-2-C-methyl-D-erythritol 2-phosphate contacts are provided by residues 56–58 (DIG), 132–135 (TTNE), Phe-139, and Arg-142.

Belongs to the IspF family. In terms of assembly, homotrimer. Requires a divalent metal cation as cofactor.

The catalysed reaction is 4-CDP-2-C-methyl-D-erythritol 2-phosphate = 2-C-methyl-D-erythritol 2,4-cyclic diphosphate + CMP. Its pathway is isoprenoid biosynthesis; isopentenyl diphosphate biosynthesis via DXP pathway; isopentenyl diphosphate from 1-deoxy-D-xylulose 5-phosphate: step 4/6. Involved in the biosynthesis of isopentenyl diphosphate (IPP) and dimethylallyl diphosphate (DMAPP), two major building blocks of isoprenoid compounds. Catalyzes the conversion of 4-diphosphocytidyl-2-C-methyl-D-erythritol 2-phosphate (CDP-ME2P) to 2-C-methyl-D-erythritol 2,4-cyclodiphosphate (ME-CPP) with a corresponding release of cytidine 5-monophosphate (CMP). The sequence is that of 2-C-methyl-D-erythritol 2,4-cyclodiphosphate synthase from Symbiobacterium thermophilum (strain DSM 24528 / JCM 14929 / IAM 14863 / T).